The chain runs to 203 residues: UDP-N-acetylglucosamine transferase subunit ALG13 (203 aa).

It belongs to the glycosyltransferase 28 family. As to quaternary structure, heterodimer with ALG14 to form a functional enzyme.

Its subcellular location is the endoplasmic reticulum. The enzyme catalyses an N-acetyl-alpha-D-glucosaminyl-diphospho-di-trans,poly-cis-dolichol + UDP-N-acetyl-alpha-D-glucosamine = an N,N'-diacetylchitobiosyl-diphospho-di-trans,poly-cis-dolichol + UDP + H(+). In terms of biological role, involved in protein N-glycosylation. Essential for the second step of the dolichol-linked oligosaccharide pathway. The protein is UDP-N-acetylglucosamine transferase subunit ALG13 (ALG13) of Eremothecium gossypii (strain ATCC 10895 / CBS 109.51 / FGSC 9923 / NRRL Y-1056) (Yeast).